The chain runs to 557 residues: Putative inactive polypeptide N-acetylgalactosaminyltransferase 11 (557 aa).

The Cytoplasmic segment spans residues 1-4 (MKSL). The chain crosses the membrane as a helical; Signal-anchor for type II membrane protein span at residues 5–27 (LFGTPCSCAIFILVYCIITLFIW). Residues 28–557 (FLYTDNLSNA…MRDICLSVNH (530 aa)) lie on the Lumenal side of the membrane. N-linked (GlcNAc...) asparagine glycans are attached at residues asparagine 33 and asparagine 103. 5 disulfides stabilise this stretch: cysteine 99-cysteine 325, cysteine 316-cysteine 397, cysteine 437-cysteine 450, cysteine 472-cysteine 486, and cysteine 511-cysteine 526. A catalytic subdomain A region spans residues 109–215 (TVTVSIVIAI…RGWLPPLLEP (107 aa)). An N-linked (GlcNAc...) asparagine glycan is attached at asparagine 220. The interval 271 to 333 (PYPSSQLEGR…PCSRVGIIYK (63 aa)) is catalytic subdomain B. Residue asparagine 379 is glycosylated (N-linked (GlcNAc...) asparagine). A Ricin B-type lectin domain is found at 456 to 557 (EDWTLTSRCQ…MRDICLSVNH (102 aa)).

The protein belongs to the glycosyltransferase 2 family. GalNAc-T subfamily.

Its subcellular location is the golgi apparatus membrane. Its function is as follows. Probable inactive glycosyltransferase. This chain is Putative inactive polypeptide N-acetylgalactosaminyltransferase 11, found in Drosophila melanogaster (Fruit fly).